Here is a 173-residue protein sequence, read N- to C-terminus: Photosystem I assembly protein Ycf3 (173 aa).

3 TPR repeats span residues 35 to 68 (AFSYYRDGMSAQSEGEYAEALENYYEALKLEEDP), 72 to 105 (SYILYNIGLIYASNGEYIKALEYYHQGLELNFKL), and 120 to 153 (GVQAVEEKNIELSKLMFDKAAQYWQQAIKLAPDN).

This sequence belongs to the Ycf3 family.

It localises to the plastid. The protein localises to the chloroplast thylakoid membrane. In terms of biological role, essential for the assembly of the photosystem I (PSI) complex. May act as a chaperone-like factor to guide the assembly of the PSI subunits. This chain is Photosystem I assembly protein Ycf3, found in Porphyra purpurea (Red seaweed).